The sequence spans 473 residues: Keratin, type I cuticular Ha6 (473 aa).

A head region spans residues 1–93 (MATQICTPTF…FCEGAFNGNE (93 aa)). Residues 93-404 (EKATMQILND…RLLDGEDCKL (312 aa)) form the IF rod domain. A coil 1A region spans residues 94–128 (KATMQILNDRLANYLEKVRQLEQENTQLECRIREW). Positions 129-139 (YECQIPYICPD) are linker 1. Positions 140–240 (YQSYFKTAEE…HEEEVNALRS (101 aa)) are coil 1B. The segment at 241 to 256 (QLGDRLNVEVDAAPPV) is linker 12. The coil 2 stretch occupies residues 257-400 (DLNKILDDMR…ATYRRLLDGE (144 aa)). The tract at residues 401–473 (DCKLPAHPCS…SREHVVPRAM (73 aa)) is tail.

The protein belongs to the intermediate filament family. In terms of assembly, heterotetramer of two type I and two type II keratins. In skin, only expressed in the suprabasal cells of tail scale epidermis. Suprabasally expressed in stratified squamous epithelia and also in the posterior unit of the complex filiform papillae of tongue. Expressed in rare anatomical sites in which an orthokeratinized stratum corneum would be too soft and a hard keratinized structure would be too rigid to meet the functional requirement of the respective epithelia.

This chain is Keratin, type I cuticular Ha6, found in Mus musculus (Mouse).